Consider the following 2177-residue polypeptide: Protein sidekick-2 (2177 aa).

The first 26 residues, 1–26, serve as a signal peptide directing secretion; sequence MKGLGVPAAALLWGGLSALLPPSLPA. The Extracellular portion of the chain corresponds to 27 to 1937; sequence DDVSPYFKTE…ANPFYEEWWF (1911 aa). 6 consecutive Ig-like C2-type domains span residues 31–113, 118–205, 220–299, 313–401, 407–496, and 501–590; these read PYFK…TEVQ, GSFE…QPIT, PTII…SSVP, PQFV…TYLA, PNIT…ADLV, and TRIT…AHLR. A disulfide bridge links Cys-53 with Cys-96. Residues Asn-198 and Asn-228 are each glycosylated (N-linked (GlcNAc...) asparagine). 2 disulfides stabilise this stretch: Cys-242/Cys-289 and Cys-335/Cys-385. Asn-408 carries an N-linked (GlcNAc...) asparagine glycan. 2 cysteine pairs are disulfide-bonded: Cys-428-Cys-480 and Cys-522-Cys-574. N-linked (GlcNAc...) asparagine glycosylation is found at Asn-582, Asn-614, Asn-709, Asn-748, Asn-809, Asn-941, and Asn-953. Fibronectin type-III domains are found at residues 597–693, 698–794, 799–898, 902–996, 1000–1099, 1104–1202, 1207–1304, 1305–1402, 1407–1504, 1509–1626, 1631–1727, 1731–1826, and 1829–1928; these read APES…LPEE, PPQN…TLQG, PPGN…THED, PVGH…VPPE, APTN…TLQA, APAN…TRES, GPSN…TLDD, VPGP…TEKR, PPSK…TLQA, APTI…VGEA, APQN…TQQA, APGS…TGPG, and APGP…AQKA. 11 N-linked (GlcNAc...) asparagine glycosylation sites follow: Asn-1107, Asn-1210, Asn-1261, Asn-1346, Asn-1462, Asn-1580, Asn-1593, Asn-1675, Asn-1694, Asn-1746, and Asn-1820. Residues 1938–1958 form a helical membrane-spanning segment; sequence LVVIALVGLIFILLLVFVLII. The Cytoplasmic segment spans residues 1959-2177; the sequence is RGQSKKYAKK…APIGGFSSFV (219 aa). 2 disordered regions span residues 2044-2071 and 2103-2177; these read AESS…VDPA and QAYS…SSFV. Polar residues-rich tracts occupy residues 2045 to 2063 and 2119 to 2130; these read ESSS…QGSD and PLSNSTSTQQGS. Over residues 2142-2151 the composition is skewed to pro residues; it reads PQTPGNPPSQ. A PDZ-binding motif is present at residues 2171 to 2177; sequence GGFSSFV.

Belongs to the sidekick family. Homodimer; mediates homophilic interactions to promote cell adhesion. Expressed by non-overlapping subsets of retinal neurons. SDK1, SDK2, DSCAM and DSCAML1 are expressed in non-overlapping subsets of interneurons and retinal ganglion cells (RGCs) that form synapses in distinct inner plexiform layer (IPL) sublaminae.

The protein resides in the cell membrane. It localises to the synapse. In terms of biological role, adhesion molecule that promotes lamina-specific synaptic connections in the retina. Expressed in specific subsets of interneurons and retinal ganglion cells (RGCs) and promotes synaptic connectivity via homophilic interactions. This chain is Protein sidekick-2, found in Gallus gallus (Chicken).